The primary structure comprises 187 residues: dCTP deaminase (187 aa).

Residues 110–115 (KSTYAR), 134–136 (TLE), Q155, Y169, and Q179 each bind dCTP. E136 acts as the Proton donor/acceptor in catalysis.

It belongs to the dCTP deaminase family. Homotrimer.

The catalysed reaction is dCTP + H2O + H(+) = dUTP + NH4(+). It participates in pyrimidine metabolism; dUMP biosynthesis; dUMP from dCTP (dUTP route): step 1/2. Catalyzes the deamination of dCTP to dUTP. The sequence is that of dCTP deaminase from Bordetella pertussis (strain Tohama I / ATCC BAA-589 / NCTC 13251).